The chain runs to 387 residues: Patatin-08 (387 aa).

The signal sequence occupies residues methionine 1 to alanine 23. A PNPLA domain is found at leucine 32–isoleucine 230. A GXGXXG motif is present at residues glycine 36–glycine 41. Positions glycine 75–glycine 79 match the GXSXG motif. Serine 77 acts as the Nucleophile in catalysis. N-linked (GlcNAc...) asparagine glycosylation occurs at asparagine 115. Aspartate 216 (proton acceptor) is an active-site residue. The DGA/G motif lies at aspartate 216 to alanine 218. Positions glutamate 361–alanine 385 form a coiled coil.

It belongs to the patatin family. Tuber.

It localises to the vacuole. Functionally, probable lipolytic acyl hydrolase (LAH), an activity which is thought to be involved in the response of tubers to pathogens. In Solanum tuberosum (Potato), this protein is Patatin-08.